The following is an 81-amino-acid chain: 2,3-bisphosphoglycerate-independent phosphoglycerate mutase (81 aa).

The active-site Phosphoserine intermediate is Ser-14. Ser-14 provides a ligand contact to Mn(2+). His-75 lines the substrate pocket.

This sequence belongs to the BPG-independent phosphoglycerate mutase family. In terms of assembly, monomer. The cofactor is Mn(2+).

The enzyme catalyses (2R)-2-phosphoglycerate = (2R)-3-phosphoglycerate. It participates in carbohydrate degradation; glycolysis; pyruvate from D-glyceraldehyde 3-phosphate: step 3/5. Its function is as follows. Catalyzes the interconversion of 2-phosphoglycerate and 3-phosphoglycerate. This Tomato big bud phytoplasma protein is 2,3-bisphosphoglycerate-independent phosphoglycerate mutase (gpmI).